A 217-amino-acid chain; its full sequence is N-(5'-phosphoribosyl)anthranilate isomerase (217 aa).

Belongs to the TrpF family.

The enzyme catalyses N-(5-phospho-beta-D-ribosyl)anthranilate = 1-(2-carboxyphenylamino)-1-deoxy-D-ribulose 5-phosphate. It participates in amino-acid biosynthesis; L-tryptophan biosynthesis; L-tryptophan from chorismate: step 3/5. The polypeptide is N-(5'-phosphoribosyl)anthranilate isomerase (Bacillus velezensis (strain DSM 23117 / BGSC 10A6 / LMG 26770 / FZB42) (Bacillus amyloliquefaciens subsp. plantarum)).